Reading from the N-terminus, the 125-residue chain is Holo-[acyl-carrier-protein] synthase (125 aa).

Mg(2+) contacts are provided by Asp8 and Glu57.

The protein belongs to the P-Pant transferase superfamily. AcpS family. The cofactor is Mg(2+).

It is found in the cytoplasm. It catalyses the reaction apo-[ACP] + CoA = holo-[ACP] + adenosine 3',5'-bisphosphate + H(+). Its function is as follows. Transfers the 4'-phosphopantetheine moiety from coenzyme A to a Ser of acyl-carrier-protein. This chain is Holo-[acyl-carrier-protein] synthase, found in Dechloromonas aromatica (strain RCB).